Reading from the N-terminus, the 426-residue chain is Na(+)/H(+) antiporter 1 (426 aa).

Transmembrane regions (helical) follow at residues 1–21 (MELM…SLVA), 29–49 (IPDI…LQII), 57–77 (IFEY…AFTM), 95–115 (ITFL…LNLP), 120–140 (VGYL…IPVF), 158–178 (IFND…FGLF), 184–204 (LIDL…LAKI), 208–228 (IIIH…GAML), 236–256 (LLPS…IMGL), 286–306 (VFIF…NYFI), 309–329 (LLVA…LGLI), and 382–402 (IAGT…ILEA).

The protein belongs to the monovalent cation:proton antiporter 1 (CPA1) transporter (TC 2.A.36) family.

Its subcellular location is the cell membrane. In terms of biological role, this is a Na(+)/H(+) antiporter. Can also transport lithium. This is Na(+)/H(+) antiporter 1 from Methanocaldococcus jannaschii (strain ATCC 43067 / DSM 2661 / JAL-1 / JCM 10045 / NBRC 100440) (Methanococcus jannaschii).